The primary structure comprises 519 residues: tRNA pseudouridine synthase Pus10 (519 aa).

The tract at residues 70–98 (NENEEIDENTKNNEDTENKADDKSQSNEE) is disordered. Over residues 77 to 98 (ENTKNNEDTENKADDKSQSNEE) the composition is skewed to basic and acidic residues. The THUMP domain occupies 144-265 (NESEENESNI…NQKIYLQINP (122 aa)). The active-site Nucleophile is aspartate 334. Tyrosine 398 and tyrosine 476 together coordinate substrate.

It belongs to the pseudouridine synthase Pus10 family.

The catalysed reaction is uridine(54) in tRNA = pseudouridine(54) in tRNA. The enzyme catalyses uridine(55) in tRNA = pseudouridine(55) in tRNA. Responsible for synthesis of pseudouridine from uracil-54 and uracil-55 in the psi GC loop of transfer RNAs. In Methanococcus voltae (strain ATCC BAA-1334 / A3), this protein is tRNA pseudouridine synthase Pus10.